Reading from the N-terminus, the 277-residue chain is MEMO1 family protein TM_0087 (277 aa).

This sequence belongs to the MEMO1 family.

The polypeptide is MEMO1 family protein TM_0087 (Thermotoga maritima (strain ATCC 43589 / DSM 3109 / JCM 10099 / NBRC 100826 / MSB8)).